A 508-amino-acid polypeptide reads, in one-letter code: UBX domain-containing protein 4 (508 aa).

Residues methionine 1–glutamate 200 are interaction with UBQLN1. The Cytoplasmic segment spans residues methionine 1–threonine 413. Composition is skewed to polar residues over residues serine 117–asparagine 151 and threonine 160–serine 187. The disordered stretch occupies residues serine 117–asparagine 196. The 79-residue stretch at glutamate 315 to valine 393 folds into the UBX domain. The stretch at leucine 414–phenylalanine 434 is an intramembrane region. The Cytoplasmic segment spans residues serine 435–methionine 508. The disordered stretch occupies residues threonine 440–methionine 508. The segment covering glutamine 441–serine 458 has biased composition (polar residues). Residues lysine 459–aspartate 491 show a composition bias toward basic and acidic residues. Position 489 is a phosphothreonine (threonine 489). A compositionally biased stretch (polar residues) spans asparagine 498–methionine 508.

Directly interacts with VCP. Interacts with UBQLN1. Forms a complex with VCP and UBQLN1.

It localises to the endoplasmic reticulum membrane. It is found in the nucleus envelope. Functionally, involved in endoplasmic reticulum-associated protein degradation (ERAD). Acts as a platform to recruit both UBQLN1 and VCP to the ER during ERAD. The polypeptide is UBX domain-containing protein 4 (UBXN4) (Pongo abelii (Sumatran orangutan)).